The primary structure comprises 150 residues: Mating pheromone 1 (150 aa).

Positions 1 to 16 (MKAIFIILAILMVTQA) are cleaved as a signal peptide. Residues 17–52 (FKMTSKVNTKLQSQIQSKFQSKNKLASTFQTSSKLK) constitute a propeptide that is removed on maturation.

It is found in the secreted. Functionally, mating ciliate pheromones (or gamones) are diffusible extracellular communication signals that distinguish different intraspecific classes of cells commonly referred to as 'mating types'. They prepare the latter for conjugation by changing their cell surface properties. This Euplotoides octocarinatus (Freshwater ciliate) protein is Mating pheromone 1.